The sequence spans 393 residues: Glutamyl-tRNA reductase (393 aa).

Substrate is bound by residues 47-50 (TCSR), Ser98, 103-105 (ETD), and Gln109. The active-site Nucleophile is the Cys48. 177–182 (GAGAVG) serves as a coordination point for NADP(+).

It belongs to the glutamyl-tRNA reductase family. In terms of assembly, homodimer.

It catalyses the reaction (S)-4-amino-5-oxopentanoate + tRNA(Glu) + NADP(+) = L-glutamyl-tRNA(Glu) + NADPH + H(+). The protein operates within porphyrin-containing compound metabolism; protoporphyrin-IX biosynthesis; 5-aminolevulinate from L-glutamyl-tRNA(Glu): step 1/2. Its function is as follows. Catalyzes the NADPH-dependent reduction of glutamyl-tRNA(Glu) to glutamate 1-semialdehyde (GSA). This chain is Glutamyl-tRNA reductase, found in Pyrobaculum neutrophilum (strain DSM 2338 / JCM 9278 / NBRC 100436 / V24Sta) (Thermoproteus neutrophilus).